A 136-amino-acid polypeptide reads, in one-letter code: Non-structural protein 1 (136 aa).

Belongs to the pneumovirus non-structural protein 1 family. In terms of assembly, monomer. Homomultimer. Heteromultimer with NS2. Interacts with the matrix protein M. Interacts with host ELOC and CUL2; this interaction allows NS1 to form an active E3 ligase with ELOC and CUL2. Interacts with host IRF3; this interaction leads to the disrupted association of IRF3 with CREBBP and thus reduced binding of IRF3 to the IFN-beta promoter. Interacts with host MAVS; this interaction prevents MAVS binding to RIGI and inhibits signaling pathway leading to interferon production. Interacts with host TRIM25 (via SPRY domain); this interaction suppresses RIGI ubiquitination and results in decreased interaction between RIGI and MAVS.

The protein localises to the host cytoplasm. It is found in the host mitochondrion. It localises to the host nucleus. Functionally, plays a major role in antagonizing the type I IFN-mediated antiviral response by degrading or inhibiting multiple cellular factors required for either IFN induction or response pathways. Acts cooperatively with NS2 to repress activation and nuclear translocation of host IFN-regulatory factor IRF3. Also disrupts the association of IRF3 with CREBBP. Interacts with host mitochondrial-associated membrane (MAM) MAVS and prevents the interaction with RIGI. Interacts with TRIM25 to suppress TRIM25-mediated RIGI ubiquitination and thereby RIGI-MAVS interaction. Together with NS2, participates in the proteasomal degradation of host STAT2, IRF3, IRF7, TBK1 and RIGI through a NS-degradasome involving CUL2 and Elongin-C. The degradasome requires an intact mitochondrial MAVS. Decreases the levels of host TRAF3 and IKBKE/IKK-epsilon. As functions other than disruptions of the type I IFN-mediated antiviral signaling pathways, induces host SOCS1 and SOCS3 expression. Suppresses premature apoptosis by an NF-kappa-B-dependent, interferon-independent mechanism and thus facilitates virus growth. Additionally, NS1 may serve some inhibitory role in viral transcription and RNA replication. Suppresses proliferation and activation of host CD103+ CD8+ cytotoxic T-lymphocytes and Th17 helper T-lymphocytes. The sequence is that of Non-structural protein 1 (1C) from Ovis aries (Sheep).